We begin with the raw amino-acid sequence, 875 residues long: Metal transporter CNNM2 (875 aa).

Residues 1-250 (MIGCGACEPE…TKMIVGEEKK (250 aa)) lie on the Extracellular side of the membrane. Residue Asn-112 is glycosylated (N-linked (GlcNAc...) asparagine). The segment at 122 to 148 (EHERRRHTPGERGLGGPAPPEPDSGPQ) is disordered. The chain crosses the membrane as a helical span at residues 251–271 (FLLPFWLQVIFISLLLCLSGM). Positions 251–431 (FLLPFWLQVI…DPYNDLVKEE (181 aa)) constitute a CNNM transmembrane domain. At 272–313 (FSGLNLGLMALDPMELRIVQNCGTEKEKNYAKRIEPVRRQGN) the chain is on the cytoplasmic side. The segment at residues 314-334 (YLLCSLLLGNVLVNTTLTILL) is an intramembrane region (helical). Residues 335 to 338 (DDIA) lie on the Cytoplasmic side of the membrane. A helical membrane pass occupies residues 339 to 359 (GSGLVAVVVSTIGIVIFGEIV). The Extracellular portion of the chain corresponds to 360–368 (PQAICSRHG). A helical transmembrane segment spans residues 369–389 (LAVGANTIFLTKFFMMMTFPA). Residues 390 to 875 (SYPVSKLLDC…NHSLHSEGAI (486 aa)) lie on the Cytoplasmic side of the membrane. 2 consecutive CBS domains span residues 450–511 (MTPL…CTPL) and 518–584 (YNHP…ILDE). The disordered stretch occupies residues 741–763 (AGSPGENKSPPRPCGLNHSDSLS). Ser-761 is subject to Phosphoserine.

The protein belongs to the ACDP family.

The protein resides in the cell membrane. Functionally, divalent metal cation transporter. Mediates transport of divalent metal cations in an order of Mg(2+) &gt; Co(2+) &gt; Mn(2+) &gt; Sr(2+) &gt; Ba(2+) &gt; Cu(2+) &gt; Fe(2+). In Rattus norvegicus (Rat), this protein is Metal transporter CNNM2 (Cnnm2).